The chain runs to 299 residues: Fructose-1,6-bisphosphatase class 1 (299 aa).

4 residues coordinate Mg(2+): Glu79, Asp98, Leu100, and Asp101. Residues 101-104, Tyr207, and Lys238 each bind substrate; that span reads DGSS. Residue Glu244 participates in Mg(2+) binding.

The protein belongs to the FBPase class 1 family. As to quaternary structure, homotetramer. It depends on Mg(2+) as a cofactor.

The protein resides in the cytoplasm. It catalyses the reaction beta-D-fructose 1,6-bisphosphate + H2O = beta-D-fructose 6-phosphate + phosphate. The protein operates within carbohydrate biosynthesis; gluconeogenesis. The protein is Fructose-1,6-bisphosphatase class 1 of Campylobacter curvus (strain 525.92).